The sequence spans 737 residues: Dynein axonemal intermediate chain 7 homolog (737 aa).

Residues 1–15 (MPPKSPNRSGKSTPT) show a composition bias toward polar residues. 3 disordered regions span residues 1-61 (MPPK…ERRA), 274-362 (KKVK…DDEE), and 410-452 (STVK…QQPP). Composition is skewed to basic and acidic residues over residues 18 to 61 (RPGE…ERRA), 276 to 316 (VKDE…EGRQ), and 333 to 349 (EETK…DAVK). 2 stretches are compositionally biased toward polar residues: residues 417-429 (DNPN…SRVA) and 441-451 (PSKTPLEQQQP).

The protein belongs to the DNAI7 family.

The chain is Dynein axonemal intermediate chain 7 homolog (AXP83.9) from Ciona intestinalis (Transparent sea squirt).